A 475-amino-acid chain; its full sequence is Argininosuccinate lyase 1 (475 aa).

Belongs to the lyase 1 family. Argininosuccinate lyase subfamily.

The protein resides in the cytoplasm. The enzyme catalyses 2-(N(omega)-L-arginino)succinate = fumarate + L-arginine. The protein operates within amino-acid biosynthesis; L-arginine biosynthesis; L-arginine from L-ornithine and carbamoyl phosphate: step 3/3. The polypeptide is Argininosuccinate lyase 1 (Pseudomonas fluorescens (strain Pf0-1)).